The chain runs to 793 residues: Sucrose synthase (793 aa).

Residues 263-742 (MISRILIVSI…ALARVAERYT (480 aa)) are GT-B glycosyltransferase.

It belongs to the glycosyltransferase 1 family. Homotetramer.

It carries out the reaction an NDP-alpha-D-glucose + D-fructose = a ribonucleoside 5'-diphosphate + sucrose + H(+). The catalysed reaction is ADP-alpha-D-glucose + D-fructose = sucrose + ADP + H(+). Functionally, catalyzes the reversible conversion of sucrose and a nucleotide disphosphate (NDP) into fructose and NDP-glucose; although the reaction is freely reversible in vitro, the physiological reaction seems to be sucrose cleavage. Unlike characterized plant enzymes prefers ADP as a cosubstrate, whereas plants prefer UDP. The KM for sucrose is 45-fold lower in the presence of ADP than UDP. Its preference for ADP over UDP suggests it may directly link sucrose and glycogen metabolism. This chain is Sucrose synthase, found in Acidithiobacillus caldus (strain ATCC 51756 / DSM 8584 / KU).